Reading from the N-terminus, the 165-residue chain is Transcription antitermination protein NusB (165 aa).

The segment at 1–27 (MISDDTDQFNPRDAKSPEAAKGKSAKR) is disordered. Over residues 10–21 (NPRDAKSPEAAK) the composition is skewed to basic and acidic residues.

Belongs to the NusB family.

Its function is as follows. Involved in transcription antitermination. Required for transcription of ribosomal RNA (rRNA) genes. Binds specifically to the boxA antiterminator sequence of the ribosomal RNA (rrn) operons. In Pseudomonas savastanoi pv. phaseolicola (strain 1448A / Race 6) (Pseudomonas syringae pv. phaseolicola (strain 1448A / Race 6)), this protein is Transcription antitermination protein NusB.